The following is a 278-amino-acid chain: Sulfur carrier protein FdhD (278 aa).

Residue Cys-121 is the Cysteine persulfide intermediate of the active site. 260 to 265 (FCKPGR) serves as a coordination point for Mo-bis(molybdopterin guanine dinucleotide).

Belongs to the FdhD family.

Its subcellular location is the cytoplasm. Functionally, required for formate dehydrogenase (FDH) activity. Acts as a sulfur carrier protein that transfers sulfur from IscS to the molybdenum cofactor prior to its insertion into FDH. This is Sulfur carrier protein FdhD from Salmonella agona (strain SL483).